The primary structure comprises 1058 residues: Kinesin-like protein KIN-7M, chloroplastic (1058 aa).

The N-terminal 60 residues, 1-60 (MASSSSRTRSRSPFSHRRPPSPYSSASSTSSSLINNRLLPRSSSTPTSTVYNSGGVTGSR), are a transit peptide targeting the chloroplast. The segment at 1–92 (MASSSSRTRS…QSYPSEGLIG (92 aa)) is disordered. Over residues 8 to 19 (TRSRSPFSHRRP) the composition is skewed to basic residues. Positions 23–49 (YSSASSTSSSLINNRLLPRSSSTPTST) are enriched in low complexity. Positions 50–70 (VYNSGGVTGSRSMSITRTISD) are enriched in polar residues. A Kinesin motor domain is found at 104–421 (SISVTVRFRP…LKFASRAKRI (318 aa)). ATP is bound at residue 184-191 (GVTSSGKT). Residues 422 to 509 (EINASRNKII…QKLTKLILVS (88 aa)) adopt a coiled-coil conformation. The interval 549–578 (PSSTLSLASDARRSSSKFKDENSPVGSRAE) is disordered. Positions 558–570 (DARRSSSKFKDEN) are enriched in basic and acidic residues. Coiled-coil stretches lie at residues 621–658 (PENS…ASIA), 704–826 (NNEL…AQKR), 873–904 (LEAA…LEND), and 935–999 (KEDE…SQAA). Residues 824–838 (QKRNNNSMNSAANRN) are compositionally biased toward low complexity. A disordered region spans residues 824-847 (QKRNNNSMNSAANRNGTRPGRKAR). The segment at 922 to 946 (ALSIQKSDEAEPAKEDEVTELDNKN) is disordered. Over residues 927-946 (KSDEAEPAKEDEVTELDNKN) the composition is skewed to basic and acidic residues. The RING-type zinc-finger motif lies at 1011 to 1046 (CKVCFESPTATILLPCRHFCLCKSCSLACSECPICR).

This sequence belongs to the TRAFAC class myosin-kinesin ATPase superfamily. Kinesin family. KIN-7 subfamily.

Its subcellular location is the plastid. The protein localises to the chloroplast. The polypeptide is Kinesin-like protein KIN-7M, chloroplastic (Arabidopsis thaliana (Mouse-ear cress)).